The chain runs to 126 residues: Large ribosomal subunit protein bL12 (126 aa).

The protein belongs to the bacterial ribosomal protein bL12 family. In terms of assembly, homodimer. Part of the ribosomal stalk of the 50S ribosomal subunit. Forms a multimeric L10(L12)X complex, where L10 forms an elongated spine to which 2 to 4 L12 dimers bind in a sequential fashion. Binds GTP-bound translation factors.

In terms of biological role, forms part of the ribosomal stalk which helps the ribosome interact with GTP-bound translation factors. Is thus essential for accurate translation. In Rhizorhabdus wittichii (strain DSM 6014 / CCUG 31198 / JCM 15750 / NBRC 105917 / EY 4224 / RW1) (Sphingomonas wittichii), this protein is Large ribosomal subunit protein bL12.